Here is a 143-residue protein sequence, read N- to C-terminus: Ribonuclease P protein component 2 (143 aa).

It belongs to the eukaryotic/archaeal RNase P protein component 2 family. Consists of a catalytic RNA component and at least 4-5 protein subunits.

The protein localises to the cytoplasm. The enzyme catalyses Endonucleolytic cleavage of RNA, removing 5'-extranucleotides from tRNA precursor.. Functionally, part of ribonuclease P, a protein complex that generates mature tRNA molecules by cleaving their 5'-ends. The polypeptide is Ribonuclease P protein component 2 (Saccharolobus islandicus (strain L.S.2.15 / Lassen #1) (Sulfolobus islandicus)).